We begin with the raw amino-acid sequence, 181 residues long: Oligoribonuclease (181 aa).

In terms of domain architecture, Exonuclease spans 8–171 (LIWIDLEMTG…QDIQESIAEL (164 aa)). The active site involves Y129.

The protein belongs to the oligoribonuclease family.

Its subcellular location is the cytoplasm. Functionally, 3'-to-5' exoribonuclease specific for small oligoribonucleotides. The sequence is that of Oligoribonuclease from Shewanella sp. (strain ANA-3).